A 671-amino-acid polypeptide reads, in one-letter code: tRNA(Met) cytidine acetyltransferase TmcA (671 aa).

Residues Q180, 202-211, and R319 each bind ATP; that span reads GRGKSALAGQ. The 176-residue stretch at 356-531 folds into the N-acetyltransferase domain; the sequence is QTLWRSEPET…SGCYTAMALL (176 aa). Acetyl-CoA-binding positions include 461–463, 468–474, E499, and R506; these read IAV and QREGTGR.

The protein belongs to the RNA cytidine acetyltransferase family. TmcA subfamily.

The protein resides in the cytoplasm. It carries out the reaction cytidine(34) in elongator tRNA(Met) + acetyl-CoA + ATP + H2O = N(4)-acetylcytidine(34) in elongator tRNA(Met) + ADP + phosphate + CoA + H(+). Functionally, catalyzes the formation of N(4)-acetylcytidine (ac(4)C) at the wobble position of tRNA(Met), by using acetyl-CoA as an acetyl donor and ATP (or GTP). The sequence is that of tRNA(Met) cytidine acetyltransferase TmcA from Shigella flexneri serotype 5b (strain 8401).